The primary structure comprises 264 residues: Transcription factor bHLH52 (264 aa).

One can recognise a bHLH domain in the interval 134–183 (RELSAQSIAARKRRRRITEKTQELGKLIPGSQKHNTAEMFNAAAKYVKFL).

As to quaternary structure, homodimer. Expressed constitutively in roots, leaves, stems, and flowers.

The protein resides in the nucleus. The sequence is that of Transcription factor bHLH52 (BHLH52) from Arabidopsis thaliana (Mouse-ear cress).